A 102-amino-acid polypeptide reads, in one-letter code: Small ribosomal subunit protein uS10 (102 aa).

It belongs to the universal ribosomal protein uS10 family. In terms of assembly, part of the 30S ribosomal subunit.

In terms of biological role, involved in the binding of tRNA to the ribosomes. The polypeptide is Small ribosomal subunit protein uS10 (Thermococcus kodakarensis (strain ATCC BAA-918 / JCM 12380 / KOD1) (Pyrococcus kodakaraensis (strain KOD1))).